We begin with the raw amino-acid sequence, 535 residues long: Alpha-1,3-mannosyl-glycoprotein 4-beta-N-acetylglucosaminyltransferase A (535 aa).

Residues M1–G6 lie on the Cytoplasmic side of the membrane. The helical; Signal-anchor for type II membrane protein transmembrane segment at T7–W27 threads the bilayer. The Lumenal segment spans residues Q28–N535. Residues K31–Q57 adopt a coiled-coil conformation. 2 N-linked (GlcNAc...) asparagine glycosylation sites follow: N77 and N458. S474 carries the post-translational modification Phosphoserine.

The protein belongs to the glycosyltransferase 54 family. A divalent metal cation serves as cofactor. In terms of processing, N-glycosylated. As to expression, highly expressed in small intestine, kidney, lung and spleen. Weakly expressed in brain, heart and liver.

The protein localises to the golgi apparatus membrane. Its subcellular location is the secreted. It catalyses the reaction N(4)-{beta-D-GlcNAc-(1-&gt;2)-alpha-D-Man-(1-&gt;3)-[beta-D-GlcNAc-(1-&gt;2)-alpha-D-Man-(1-&gt;6)]-beta-D-Man-(1-&gt;4)-beta-D-GlcNAc-(1-&gt;4)-beta-D-GlcNAc}-L-asparaginyl-[protein] + UDP-N-acetyl-alpha-D-glucosamine = N(4)-{beta-D-GlcNAc-(1-&gt;2)-[beta-D-GlcNAc-(1-&gt;4)]-alpha-D-Man-(1-&gt;3)-[beta-D-GlcNAc-(1-&gt;2)-alpha-D-Man-(1-&gt;6)]-beta-D-Man-(1-&gt;4)-beta-D-GlcNAc-(1-&gt;4)-beta-D-GlcNAc}-L-asparaginyl-[protein] + UDP + H(+). The enzyme catalyses an N(4)-{beta-D-GlcNAc-(1-&gt;2)-alpha-D-Man-(1-&gt;3)-[alpha-D-Man-(1-&gt;6)]-beta-D-Man-(1-&gt;4)-beta-D-GlcNAc-(1-&gt;4)-beta-D-GlcNAc}-L-asparaginyl-[protein] + UDP-N-acetyl-alpha-D-glucosamine = an N(4)-{beta-D-GlcNAc-(1-&gt;2)-[beta-D-GlcNAc-(1-&gt;4)]-alpha-D-Man-(1-&gt;3)-[alpha-D-Man-(1-&gt;6)]-beta-D-Man-(1-&gt;4)-beta-D-GlcNAc-(1-&gt;4)-beta-D-GlcNAc}-L-asparaginyl-[protein] + UDP + H(+). The catalysed reaction is an N(4)-{beta-D-GlcNAc-(1-&gt;2)-alpha-D-Man-(1-&gt;3)-[beta-D-GlcNAc-(1-&gt;2)-[beta-D-GlcNAc-(1-&gt;6)]-alpha-D-Man-(1-&gt;6)]-beta-D-Man-(1-&gt;4)-beta-D-GlcNAc-(1-&gt;4)-beta-D-GlcNAc}-L-asparaginyl-[protein] + UDP-N-acetyl-alpha-D-glucosamine = an N(4)-{beta-D-GlcNAc-(1-&gt;2)-[beta-D-GlcNAc-(1-&gt;4)]-alpha-D-Man-(1-&gt;3)-[beta-D-GlcNAc-(1-&gt;2)-[beta-D-GlcNAc-(1-&gt;6)]-alpha-D-Man-(1-&gt;6)]-beta-D-Man-(1-&gt;4)-beta-D-GlcNAc-(1-&gt;4)-beta-D-GlcNAc}-L-asparaginyl-[protein] + UDP + H(+). It carries out the reaction an N(4)-{beta-D-GlcNAc-(1-&gt;2)-alpha-D-Man-(1-&gt;3)-[beta-D-GlcNAc-(1-&gt;2)-alpha-D-Man-(1-&gt;6)]-beta-D-Man-(1-&gt;4)-beta-D-GlcNAc-(1-&gt;4)-[alpha-L-Fuc-(1-&gt;6)]-beta-D-GlcNAc}-L-asparaginyl-[protein] + UDP-N-acetyl-alpha-D-glucosamine = N(4)-{beta-D-GlcNAc-(1-&gt;2)-[beta-D-GlcNAc-(1-&gt;4)]-alpha-D-Man-(1-&gt;3)-[beta-D-GlcNAc-(1-&gt;2)-alpha-D-Man-(1-&gt;6)]-beta-D-Man-(1-&gt;4)-beta-D-GlcNAc-(1-&gt;4)-[alpha-L-Fuc-(1-&gt;6)]-beta-D-GlcNAc}-asparaginyl-[protein] + UDP + H(+). It catalyses the reaction an N(4)-{beta-D-GlcNAc-(1-&gt;2)-alpha-D-Man-(1-&gt;3)-[beta-D-Gal-(1-&gt;4)-beta-D-GlcNAc-(1-&gt;2)-alpha-D-Man-(1-&gt;6)]-beta-D-Man-(1-&gt;4)-beta-D-GlcNAc-(1-&gt;4)-beta-D-GlcNAc}-L-asparaginyl-[protein] + UDP-N-acetyl-alpha-D-glucosamine = an N(4)-{beta-D-GlcNAc-(1-&gt;2)-[beta-D-GlcNAc-(1-&gt;4)]-alpha-D-Man-(1-&gt;3)-[beta-D-Gal-(1-&gt;4)-beta-D-GlcNAc-(1-&gt;2)-alpha-D-Man-(1-&gt;6)]-beta-D-Man-(1-&gt;4)-beta-D-GlcNAc-(1-&gt;4)-beta-D-GlcNAc}-L-asparaginyl-[protein] + UDP + H(+). The enzyme catalyses N(4)-{beta-D-GlcNAc-(1-&gt;2)-alpha-D-Man-(1-&gt;3)-[alpha-D-Man-(1-&gt;3)-{alpha-D-Man-(1-&gt;6)}-alpha-D-Man-(1-&gt;6)]-beta-D-Man-(1-&gt;4)-beta-D-GlcNAc-(1-&gt;4)-beta-D-GlcNAc}-asparaginyl-[protein] + UDP-N-acetyl-alpha-D-glucosamine = N(4)-{beta-D-GlcNAc-(1-&gt;2)-[beta-D-GlcNAc-(1-&gt;4)]-alpha-D-Man-(1-&gt;3)-[alpha-D-Man-(1-&gt;3)-{alpha-D-Man-(1-&gt;6)}-alpha-D-Man-(1-&gt;6)]-beta-D-Man-(1-&gt;4)-beta-D-GlcNAc-(1-&gt;4)-beta-D-GlcNAc}-asparaginyl-[protein] + UDP + H(+). The catalysed reaction is N(4)-{beta-D-GlcNAc-(1-&gt;2)-alpha-D-Man-(1-&gt;3)-beta-D-Man-(1-&gt;4)-beta-D-GlcNAc-(1-&gt;4)-beta-D-GlcNAc}-asparaginyl-[protein] + UDP-N-acetyl-alpha-D-glucosamine = N(4)-{beta-D-GlcNAc-(1-&gt;2)-[beta-D-GlcNAc-(1-&gt;4)]-alpha-D-Man-(1-&gt;3)-beta-D-Man-(1-&gt;4)-beta-D-GlcNAc-(1-&gt;4)-beta-D-GlcNAc}-asparaginyl-[protein] + UDP + H(+). The protein operates within protein modification; protein glycosylation. With respect to regulation, inhibited by UDP. Functionally, glycosyltransferase that catalyze the transfer of GlcNAc from UDP-GlcNAc to the GlcNAcbeta1-2Manalpha1-3 arm of the core structure of N-linked glycans through a beta1-4 linkage and participates in the production of tri- and tetra-antennary N-linked sugar chains. Involved in glucose transport by mediating SLC2A2/GLUT2 glycosylation, thereby controlling cell-surface expression of SLC2A2 in pancreatic beta cells. This chain is Alpha-1,3-mannosyl-glycoprotein 4-beta-N-acetylglucosaminyltransferase A, found in Bos taurus (Bovine).